A 336-amino-acid polypeptide reads, in one-letter code: Ornithine carbamoyltransferase, catabolic (336 aa).

Carbamoyl phosphate is bound by residues 62–65 (STRT), Gln89, Arg113, and 140–143 (HPTQ). L-ornithine contacts are provided by residues Asn172, Asp236, and 240 to 241 (SM). Residues 277 to 278 (CL) and Arg322 contribute to the carbamoyl phosphate site.

Belongs to the aspartate/ornithine carbamoyltransferase superfamily. OTCase family.

Its subcellular location is the cytoplasm. The enzyme catalyses carbamoyl phosphate + L-ornithine = L-citrulline + phosphate + H(+). The protein operates within amino-acid degradation; L-arginine degradation via ADI pathway; carbamoyl phosphate from L-arginine: step 2/2. Functionally, reversibly catalyzes the transfer of the carbamoyl group from carbamoyl phosphate (CP) to the N(epsilon) atom of ornithine (ORN) to produce L-citrulline. In Staphylococcus aureus (strain MSSA476), this protein is Ornithine carbamoyltransferase, catabolic.